The primary structure comprises 1397 residues: Centlein (1397 aa).

2 disordered regions span residues 1 to 43 (MAAR…GLAG) and 56 to 76 (LWRGEEGSGGRRGSGRAGAAV). A2 is subject to N-acetylalanine. A phosphoserine mark is found at S5, S9, and S22. 2 coiled-coil regions span residues 95 to 126 (EEAKATRSQLLEEELSSLKEELALCQADKEFV) and 405 to 481 (VVNL…KLMA). 2 disordered regions span residues 422-449 (LKEKLEESQGTAPSLSPHDSDSSHSGKA) and 485-521 (CDQDFSEKGTEGKHKEPPVKRSRSLSPKSSFMGSEEL). Basic and acidic residues predominate over residues 485–503 (CDQDFSEKGTEGKHKEPPV). 3 coiled-coil regions span residues 674 to 778 (KNEK…KALR), 973 to 1114 (ISLR…MELL), and 1152 to 1299 (SESN…LKKM). Residue S1219 is modified to Phosphoserine. Phosphothreonine is present on T1334.

In terms of assembly, interacts with CEP250 and CEP68. Interacts with NEK2; the interaction leads to phosphorylation of CNTLN. Post-translationally, phosphorylated directly or indirectly by NEK2.

Its subcellular location is the cytoplasm. It localises to the cytoskeleton. The protein resides in the microtubule organizing center. The protein localises to the centrosome. It is found in the centriole. Functionally, required for centrosome cohesion and recruitment of CEP68 to centrosomes. This Mus musculus (Mouse) protein is Centlein.